A 522-amino-acid polypeptide reads, in one-letter code: Glutamate--cysteine ligase, chloroplastic (522 aa).

Residues 1-45 (MALMSQAGSSHCIYSEKMKCISGHSSITSNMEMLKMKDICFGNIS) constitute a chloroplast transit peptide. C186 and C406 are joined by a disulfide.

This sequence belongs to the carboxylate-amine ligase family. Glutamate--cysteine ligase type 2 subfamily. Homodimer or monomer when oxidized or reduced, respectively. Post-translationally, the Cys-186-Cys-406 disulfide bridge is known to modulate the enzyme activity according to the redox status. The oxidized form constitutes the active enzyme.

The protein resides in the plastid. Its subcellular location is the chloroplast. It catalyses the reaction L-cysteine + L-glutamate + ATP = gamma-L-glutamyl-L-cysteine + ADP + phosphate + H(+). It participates in sulfur metabolism; glutathione biosynthesis; glutathione from L-cysteine and L-glutamate: step 1/2. The chain is Glutamate--cysteine ligase, chloroplastic (GSH1) from Nicotiana tabacum (Common tobacco).